A 71-amino-acid polypeptide reads, in one-letter code: Virion membrane protein A13 homolog (71 aa).

The helical transmembrane segment at 1 to 21 threads the bilayer; sequence MGIIDTFVITAVTVIIFCLLI. The Virion surface segment spans residues 22-70; the sequence is YAAYKRYKCIPSPDDRDKVLKSTLNDDTLFNQTLTPDQVKALHRLVTSS.

This sequence belongs to the chordopoxvirinae A13 family.

The protein localises to the virion membrane. Functionally, essential for the encapsidation of DNA into immature virions (IV) and the subsequent maturation of IV into mature virions (MV). The chain is Virion membrane protein A13 homolog from Vertebrata (FPV).